The following is a 536-amino-acid chain: Arylsulfatase K (536 aa).

The N-terminal stretch at 1 to 24 (MIQKCIALSLFLFSALPEDNIVRA) is a signal peptide. Ca(2+)-binding residues include Asp-42 and Cys-82. Cys-82 acts as the Nucleophile in catalysis. A 3-oxoalanine (Cys) modification is found at Cys-82. Lys-130 contributes to the substrate binding site. A glycan (N-linked (GlcNAc...) asparagine) is linked at Asn-195. Substrate is bound at residue His-253. N-linked (GlcNAc...) asparagine glycosylation occurs at Asn-264. Ca(2+) is bound by residues Asp-315 and His-316. Asn-377, Asn-416, and Asn-501 each carry an N-linked (GlcNAc...) asparagine glycan.

This sequence belongs to the sulfatase family. The cofactor is Ca(2+). In terms of processing, the conversion to 3-oxoalanine (also known as C-formylglycine, FGly), of a serine or cysteine residue in prokaryotes and of a cysteine residue in eukaryotes, is critical for catalytic activity.

It is found in the secreted. The protein localises to the lysosome. It carries out the reaction an aryl sulfate + H2O = a phenol + sulfate + H(+). It catalyses the reaction Hydrolysis of the 2-sulfate groups of the 2-O-sulfo-D-glucuronate residues of chondroitin sulfate, heparin and heparitin sulfate.. Its function is as follows. Catalyzes the hydrolysis of pseudosubstrates such as p-nitrocatechol sulfate and p-nitrophenyl sulfate. Catalyzes the hydrolysis of the 2-sulfate groups of the 2-O-sulfo-D-glucuronate residues of chondroitin sulfate, heparin and heparitin sulfate. Acts selectively on 2-sulfoglucuronate and lacks activity against 2-sulfoiduronate. The polypeptide is Arylsulfatase K (arsk) (Xenopus laevis (African clawed frog)).